The chain runs to 860 residues: MANDQEMSGWTDLLHSSTKLLEQAAPSSQFPPLQRNLDQLEALSRKLKAKTLRNEAPSQSIAATRLLAREGINADQLSRDLKSFELKTTFEDVFPAETTSVEEYLQQVHEMAMVSAIQEAQKDNVRSFNNYMLKVLEEDCIKEKRDFLHSLSKTSMLPKTKMINSSRGSHAGSLVPLSPQVSSKPGTELVSMTNKPIHEKKAYVYAEVVKKLNSARERGLPFKLATLFNGAYESLEIDLTRGKSVNMQKLWQLIQGMTGEESAVQHGVSKRMALVIGARRHLECGHGKHIMDTIQSHPTQAALGGSVGNLQRIRAFLRIRLRDYGSLDFDSVDARRQPPVDTTWQQIYFCLRTGYYEEAREIAQSSRSSQQQFAPLLTEWITTGGTVAAQTAATASEECEKLLRMGDRFGQTTYDKKKLLLYTIISGSRRQIDRIMRDFSTLFNTIEDFLWFKLSCVRDVAGGSSSMIVNDGLVPYSLDDLQAYLNKFEPSYYTKNGKDPLVYPYVLLLSIQLLPAIMHMSNEAGDEGYNIDAVHVAISLVDHSILSEGSGTGRKLSVMDANAEASSMIRQYGSMYLHHGDLQMTLEYYAQAAIAVGGGQQAWSGRSNVDQQRQRNLMLKQLLTEILSQEDGIHFLLGARGSGEEGELGRFLPDIKLRQQFLIEAAHQFQEAGLYDKSIELQKRVGAFSSALETINKCLSEAICSLVRGRPDGESRTEGLVLSGNDILNSYKYHPDVSAQERHLVMEQETILRELEAILSIHKLARLNKHLDAIREVAKLPFLHLDPRQPDTTSDEFQKASSYFQTCVPDLLKVALTCLDNVADTDGSIRGMRSKIAGFLASNTQRNWPRDLYEKIARSF.

The protein belongs to the nucleoporin interacting component (NIC) family. Part of the nuclear pore complex (NPC). The NPC has an eight-fold symmetrical structure comprising a central transport channel and two rings, the cytoplasmic and nuclear rings, to which eight filaments are attached. The cytoplasmic filaments have loose ends, while the nuclear filaments are joined in a distal ring, forming a nuclear basket. NPCs are highly dynamic in configuration and composition, and can be devided in 3 subcomplexes, the NUP62 subcomplex, the NUP107-160 subcomplex and the NUP93 subcomplex, containing approximately 30 different nucleoporin proteins.

The protein localises to the nucleus envelope. The protein resides in the nucleus. Its subcellular location is the nuclear pore complex. The sequence is that of Nuclear pore complex protein NUP93B from Arabidopsis thaliana (Mouse-ear cress).